The sequence spans 243 residues: Phosphoribosyl isomerase A (243 aa).

D9 functions as the Proton acceptor in the catalytic mechanism. D128 functions as the Proton donor in the catalytic mechanism.

This sequence belongs to the HisA/HisF family.

It is found in the cytoplasm. It carries out the reaction 1-(5-phospho-beta-D-ribosyl)-5-[(5-phospho-beta-D-ribosylamino)methylideneamino]imidazole-4-carboxamide = 5-[(5-phospho-1-deoxy-D-ribulos-1-ylimino)methylamino]-1-(5-phospho-beta-D-ribosyl)imidazole-4-carboxamide. The enzyme catalyses N-(5-phospho-beta-D-ribosyl)anthranilate = 1-(2-carboxyphenylamino)-1-deoxy-D-ribulose 5-phosphate. It functions in the pathway amino-acid biosynthesis; L-histidine biosynthesis; L-histidine from 5-phospho-alpha-D-ribose 1-diphosphate: step 4/9. It participates in amino-acid biosynthesis; L-tryptophan biosynthesis; L-tryptophan from chorismate: step 3/5. In terms of biological role, involved in both the histidine and tryptophan biosynthetic pathways. The sequence is that of Phosphoribosyl isomerase A from Mycolicibacterium paratuberculosis (strain ATCC BAA-968 / K-10) (Mycobacterium paratuberculosis).